We begin with the raw amino-acid sequence, 612 residues long: MDQNPQSQLKLLVTHGKEQGYLTYSEVNDHLPEDIIDSEQIDDIIQMINDMGIPVVEEAPDADDLILNEINTDTDEDAVEAATQVLSSVESELGRTTDPVRMYMREMGTVELLTREGEIDIAKRIEEGINQVQCSVSEYPEAITYLLEQYDRVKTGQIRLSDIITGFVDPNAEEIFPPTAIHIGSELLDEQQNNEEDEENNQEDHEDDHSIDPELANEKFSELRIQYNNTNNTIKNKNRTHKDSLLEIYNLSEVFKQFRLVPKQFDHLVNNMRHMMERVRKQERIIIKLCVEICKMPKKNFIKIFPIKKINYLWFIREQNTNQPWSENLKKVKEDVFISVKKLIKIEEETGLTIEQVKDINKRMSIGEAKARRAKKEMVEANLRLVISIAKKYTNRGLQFLDLIQEGNIGLMKAVDKFEYRRGYKFSTYATWWIRQAITRSIADQARTIRIPVHMIETINKLNRISRQMLQEIGREPTPEELSEKMLIPEDKIRKVLKIAKEPISMETPIGDDDDSHLGDFIEDTTLELPLDSATSESLRSATHDVLSGLTAREAKVLRMRFGIDMNTDHTLEEVGKQFDVTRERIRQIEAKALRKLRHPSRSEVLRSFLDD.

The span at Gln191 to Glu206 shows a compositional bias: acidic residues. The tract at residues Gln191–Ser210 is disordered. The tract at residues Met378–Thr448 is sigma-70 factor domain-2. The short motif at Asp402–Gln405 is the Interaction with polymerase core subunit RpoC element. The segment at Glu457–Ser533 is sigma-70 factor domain-3. Positions Val546–His599 are sigma-70 factor domain-4. The segment at residues Leu572–Ala591 is a DNA-binding region (H-T-H motif).

The protein belongs to the sigma-70 factor family. RpoD/SigA subfamily. As to quaternary structure, interacts transiently with the RNA polymerase catalytic core.

It is found in the cytoplasm. In terms of biological role, sigma factors are initiation factors that promote the attachment of RNA polymerase to specific initiation sites and are then released. This sigma factor is the primary sigma factor during exponential growth. The protein is RNA polymerase sigma factor RpoD of Buchnera aphidicola subsp. Acyrthosiphon pisum (strain APS) (Acyrthosiphon pisum symbiotic bacterium).